We begin with the raw amino-acid sequence, 201 residues long: NAD(P)H dehydrogenase (quinone) (201 aa).

Residues 7–192 form the Flavodoxin-like domain; it reads ILVLYYSMYG…SIARYQGEYV (186 aa). FMN is bound by residues 13–18 and 81–83; these read SMYGHI and TRF. Y15 serves as a coordination point for NAD(+). Residue W101 coordinates substrate. FMN-binding positions include 116-121 and H136; that span reads STGTGG.

Belongs to the WrbA family. FMN serves as cofactor.

It catalyses the reaction a quinone + NADH + H(+) = a quinol + NAD(+). The enzyme catalyses a quinone + NADPH + H(+) = a quinol + NADP(+). The polypeptide is NAD(P)H dehydrogenase (quinone) (Shigella sonnei (strain Ss046)).